The chain runs to 225 residues: Ureidoacrylate amidohydrolase RutB (225 aa).

The active-site Proton acceptor is aspartate 22. The active site involves lysine 131. The active-site Nucleophile is cysteine 164.

The protein belongs to the isochorismatase family. RutB subfamily.

The catalysed reaction is (Z)-3-ureidoacrylate + H2O + H(+) = (Z)-3-aminoacrylate + NH4(+) + CO2. The enzyme catalyses (Z)-3-ureidoacrylate + H2O = (Z)-3-aminoacrylate + carbamate + H(+). It catalyses the reaction (Z)-2-methylureidoacrylate + H2O + H(+) = (Z)-2-methylaminoacrylate + NH4(+) + CO2. Functionally, hydrolyzes ureidoacrylate to form aminoacrylate and carbamate. The carbamate hydrolyzes spontaneously, thereby releasing one of the nitrogen atoms of the pyrimidine ring as ammonia and one of its carbon atoms as CO2. In Caulobacter vibrioides (strain ATCC 19089 / CIP 103742 / CB 15) (Caulobacter crescentus), this protein is Ureidoacrylate amidohydrolase RutB.